Consider the following 144-residue polypeptide: Cathelicidin-4 (144 aa).

A signal peptide spans 1–29 (MQTQRASLSLGRWSLWLLLLGLVVPSASA). Positions 30–130 (QALSYREAVL…DLNCNELQSV (101 aa)) are excised as a propeptide. 2 disulfide bridges follow: cysteine 85–cysteine 96 and cysteine 107–cysteine 124. Position 143 is an arginine amide (arginine 143).

Belongs to the cathelicidin family. Elastase might be responsible for its maturation. In terms of tissue distribution, large granules of neutrophils.

The protein localises to the secreted. In terms of biological role, potent microbicidal activity; active against S.aureus and E.coli. This is Cathelicidin-4 (CATHL4) from Bos taurus (Bovine).